The chain runs to 428 residues: Probable mannosyltransferase YUR1 (428 aa).

Residues 1 to 3 lie on the Cytoplasmic side of the membrane; sequence MAK. Residues 4–24 traverse the membrane as a helical; Signal-anchor for type II membrane protein segment; it reads GGSLYIVGIFLPIWTFMIYIF. Positions 25–88 are stem region; that stretch reads GKELFLIRKY…TRQNDSDSFH (64 aa). At 25-428 the chain is on the lumenal side; it reads GKELFLIRKY…YFLKEEQDEI (404 aa). Asn77, Asn82, Asn92, and Asn167 each carry an N-linked (GlcNAc...) asparagine glycan. Residues 89-428 are catalytic; that stretch reads LRENATILML…YFLKEEQDEI (340 aa). The active-site Nucleophile is Glu313. The N-linked (GlcNAc...) asparagine glycan is linked to Asn414.

It belongs to the glycosyltransferase 15 family.

It is found in the golgi apparatus membrane. It functions in the pathway protein modification; protein glycosylation. Functionally, possible glycosyltransferase involved in N-linked glycosylation. Transfers an alpha-D-mannosyl residue from GDP-mannose into lipid-linked oligosaccharide, forming an alpha-(1-&gt;2)-D-mannosyl-D-mannose linkage. The sequence is that of Probable mannosyltransferase YUR1 (YUR1) from Saccharomyces cerevisiae (strain ATCC 204508 / S288c) (Baker's yeast).